The chain runs to 295 residues: MLIEFTKMHGLGNDFMVIDLVTQRLDLTKDLVQLLGDRHLGIGFDQLLVVEPPMRPDVDFSYRIFNTDGTEVEQCGNGARCFARFVQARKLSFKQRLRVETASGIISLTTDRYGWVEVDMGKPKFEPSEIPFTPRAITKIQNAYHLDVNGTPVQLYVANMGNPHAVIKVDDVLDADVETLGKAIESHPAFPERVNVGFMQIMNQRHIRLRVFERGVGETQACGTGACAAVAIGIREGWLDEGEDVRAQLYGGSMVIKWQPGYSVMMTGPTAFVYEGVFSPDGLMAQAGIKPNPES.

Asparagine 13, glutamine 46, and asparagine 66 together coordinate substrate. The active-site Proton donor is the cysteine 75. Substrate is bound by residues 76–77 (GN), asparagine 162, asparagine 195, and 213–214 (ER). The Proton acceptor role is filled by cysteine 222. Residue 223–224 (GT) coordinates substrate.

The protein belongs to the diaminopimelate epimerase family. Homodimer.

It is found in the cytoplasm. It carries out the reaction (2S,6S)-2,6-diaminopimelate = meso-2,6-diaminopimelate. Its pathway is amino-acid biosynthesis; L-lysine biosynthesis via DAP pathway; DL-2,6-diaminopimelate from LL-2,6-diaminopimelate: step 1/1. Its function is as follows. Catalyzes the stereoinversion of LL-2,6-diaminopimelate (L,L-DAP) to meso-diaminopimelate (meso-DAP), a precursor of L-lysine and an essential component of the bacterial peptidoglycan. This chain is Diaminopimelate epimerase, found in Psychrobacter cryohalolentis (strain ATCC BAA-1226 / DSM 17306 / VKM B-2378 / K5).